The primary structure comprises 2148 residues: Polyketide synthase 1 (2148 aa).

The segment at F19–H261 is N-terminal acylcarrier protein transacylase domain (SAT). The Ketosynthase family 3 (KS3) domain maps to E394–D829. Catalysis depends on for beta-ketoacyl synthase activity residues C566, H701, and H745. Positions F930–L1236 are malonyl-CoA:ACP transacylase (MAT) domain. S1018 (for acyl/malonyl transferase activity) is an active-site residue. The interval T1310–P1624 is product template (PT) domain. The segment at H1314–V1447 is N-terminal hotdog fold. In terms of domain architecture, PKS/mFAS DH spans H1314–N1619. The active-site Proton acceptor; for dehydratase activity is the H1346. Residues L1474–N1619 form a C-terminal hotdog fold region. D1533 functions as the Proton donor; for dehydratase activity in the catalytic mechanism. The segment at N1619–H1655 is disordered. Over residues R1634–S1650 the composition is skewed to low complexity. A Carrier 1 domain is found at R1678–T1752. S1712 carries the O-(pantetheine 4'-phosphoryl)serine modification. Positions S1755 to P1790 are enriched in low complexity. The disordered stretch occupies residues S1755–G1796. One can recognise a Carrier 2 domain in the interval S1793 to H1870. S1830 is subject to O-(pantetheine 4'-phosphoryl)serine. A thioesterase (TE) domain region spans residues L1882–T2146. Catalysis depends on S1973, which acts as the For thioesterase activity.

It participates in pigment biosynthesis. Polyketide synthase; part of the Pks1 gene cluster that mediates the biosynthesis of an anthraquinone derivative pigment that contributes to conidial pigmentation that provides protection from UV radiation, heat and cold stress. The polyketide synthase Pks1 produces 1-acetyl-2,4,6,8-tetrahydroxy-9,10-anthraquinone though condensation of acetyl-CoA with malonyl-CoA. The dehydratase EthD and the laccase Mlac1 further convert the anthraquinone derivative into the final conidial pigment. This is Polyketide synthase 1 from Metarhizium robertsii (strain ARSEF 23 / ATCC MYA-3075) (Metarhizium anisopliae (strain ARSEF 23)).